Reading from the N-terminus, the 156-residue chain is Small ribosomal subunit protein uS7 (156 aa).

Belongs to the universal ribosomal protein uS7 family. Part of the 30S ribosomal subunit. Contacts proteins S9 and S11.

One of the primary rRNA binding proteins, it binds directly to 16S rRNA where it nucleates assembly of the head domain of the 30S subunit. Is located at the subunit interface close to the decoding center, probably blocks exit of the E-site tRNA. The sequence is that of Small ribosomal subunit protein uS7 from Methylococcus capsulatus (strain ATCC 33009 / NCIMB 11132 / Bath).